The sequence spans 528 residues: MEPKLLLSAHKPLFVSCNSPFNEKTKLSVKSGLPMSTIRAARSQFMGEGLILGNKYGFWSTSRKTRVVVEPVRAAVKRRKELTFDSVVQRDKKLKLVLNIRKILVSQPDRMMSLRGLGKYRRDLGLKKRRRFIALLRKYPGVFEIVEEGAYSLRFKMTSEAERLYLDEMRIRNELEDVLVVKLRKLVMMSIDKRILLEKISHLKTDLGLPLEFRDTICQRYPQYFRVVPTPRGPALELTHWDPELAVSAAELSEDDNRTRESEERNLIIDRPPKFNRVKLPRGLNLSKSETRKISQFRDMQYISPYKDFSHLRSGTLEKEKHACGVIHELLSLTTEKRTLVDHLTHFREEFRFSQQLRGMLIRHPDLFYVSLKGERDSVFLREAYRNSELIDKDPLTLVKEKMRALVSVPRFPRRGGPRKDEEGREVEIDGSDADGEEEEEESDAEEWSDVDGYLEGEDGGNDDDGDWTDDEGEEDVPPNFDDDDEDEEEDSVKIGLSPSSRKSSSPRKKEEKVLTPVFPDGTPREKW.

The N-terminal 73 residues, 1 to 73 (MEPKLLLSAH…KTRVVVEPVR (73 aa)), are a transit peptide targeting the chloroplast. The region spanning 80 to 408 (KELTFDSVVQ…VKEKMRALVS (329 aa)) is the PORR domain. The interval 410–528 (PRFPRRGGPR…FPDGTPREKW (119 aa)) is disordered. The segment covering 418–428 (PRKDEEGREVE) has biased composition (basic and acidic residues). Over residues 429–491 (IDGSDADGEE…DDDDEDEEED (63 aa)) the composition is skewed to acidic residues.

The protein localises to the plastid. It localises to the chloroplast. In terms of biological role, RNA-binding protein involved in group II intron splicing. Binds specific group II introns and promotes their splicing. Functions in the context of a heterodimer with the ribonuclease III domain-containing protein RNC1. The protein is Protein WHAT'S THIS FACTOR 1 homolog, chloroplastic of Arabidopsis thaliana (Mouse-ear cress).